The chain runs to 226 residues: Gap junction beta-2 protein (226 aa).

Residues 2–13 (DWGALQTILGGV) lie within the membrane without spanning it. The Cytoplasmic portion of the chain corresponds to 14 to 20 (NKYSTSI). The helical transmembrane segment at 21–40 (GKIWLTVLFIFRIMILVVAA) threads the bilayer. Residues 41-73 (KEVWGDEQADFVCNTLQPGCKNVCYDHYFPISH) lie on the Extracellular side of the membrane. Residues E42, G45, and E47 each coordinate Ca(2+). Cystine bridges form between C53/C180, C60/C174, and C64/C169. A helical transmembrane segment spans residues 74–94 (IRLWALQLIFVSTPALLVAMH). Topologically, residues 95–135 (VAYRRHEKKRKFIKGEIKNEFKDIEEIKTQKVRIEGSLWWT) are cytoplasmic. Residues 136-156 (YTSSIFFRVVFEAAFMYVFYV) form a helical membrane-spanning segment. Topologically, residues 157 to 189 (MYDGFSMQRLVKCNAWPCPNTVDCFVSRPTEKT) are extracellular. The helical transmembrane segment at 190-210 (VFTVFMIAVSGICILLNVTEL) threads the bilayer. At 211–226 (CYLLIRYCSGKSKKPV) the chain is on the cytoplasmic side.

Belongs to the connexin family. Beta-type (group I) subfamily. As to quaternary structure, a hemichannel or connexon is composed of a hexamer of connexins. A functional gap junction is formed by the apposition of two hemichannels. Forms heteromeric channels with GJB4. Interacts with CNST.

The protein resides in the cell membrane. It is found in the cell junction. It localises to the gap junction. Its function is as follows. Structural component of gap junctions. Gap junctions are dodecameric channels that connect the cytoplasm of adjoining cells. They are formed by the docking of two hexameric hemichannels, one from each cell membrane. Small molecules and ions diffuse from one cell to a neighboring cell via the central pore. The sequence is that of Gap junction beta-2 protein (GJB2) from Macaca mulatta (Rhesus macaque).